The primary structure comprises 245 residues: Uridylate kinase (245 aa).

An ATP-binding site is contributed by 18–21; the sequence is KLSG. G60 is a binding site for UMP. 2 residues coordinate ATP: G61 and R65. Residues D80 and 141–148 contribute to the UMP site; that span reads TGNPFFTT. Positions 168, 174, and 177 each coordinate ATP.

The protein belongs to the UMP kinase family. In terms of assembly, homohexamer.

Its subcellular location is the cytoplasm. It carries out the reaction UMP + ATP = UDP + ADP. The protein operates within pyrimidine metabolism; CTP biosynthesis via de novo pathway; UDP from UMP (UMPK route): step 1/1. Inhibited by UTP. Catalyzes the reversible phosphorylation of UMP to UDP. The polypeptide is Uridylate kinase (Pseudomonas aeruginosa (strain UCBPP-PA14)).